Here is a 1529-residue protein sequence, read N- to C-terminus: ABC multidrug transporter AFR2 (1529 aa).

The ABC transporter 1 domain maps to 144 to 394; that stretch reads GSLRDLIGNR…FVDMGFHCPS (251 aa). N-linked (GlcNAc...) asparagine glycosylation is found at Asn235 and Asn318. 5 helical membrane-spanning segments follow: residues 510 to 530, 539 to 559, 589 to 609, 614 to 634, and 648 to 668; these read LFGNFIMALIIGSVFYNLPVT, ALLFFAILMSAFGSALEILIL, IPYKVMNCIIFNLTLYFMTNL, GAYFFFMLISFTLTMVMSMLF, and LAPAALLILGLVMYTGFAVNV. Residue Asn742 is glycosylated (N-linked (GlcNAc...) asparagine). A helical membrane pass occupies residues 757-777; that stretch reads GILIGFFLFFTAIYLTATEFI. In terms of domain architecture, ABC transporter 2 spans 845-1087; the sequence is FSWKDVVYDI…ILIDYFEKNG (243 aa). 881–888 provides a ligand contact to ATP; it reads GVSGAGKT. A run of 5 helical transmembrane segments spans residues 1193–1213, 1229–1249, 1268–1288, 1314–1334, and 1353–1373; these read YIWAKVALCSLSGLFIGFSFF, VFMMFTIFGQLTQQIMPNFVT, IFILSNIVSEIPWAILMGVII, LMFLYIEMFLLFNATFSIMIV, and MCLIFCGVLASGSSLPGFWVF. N-linked (GlcNAc...) asparagine glycosylation occurs at Asn1434. A helical membrane pass occupies residues 1465-1485; it reads FGLLWVYVVFNVIAAIGIYWL. The span at 1493–1505 shows a compositional bias: basic and acidic residues; sequence GKERASEPEDVQE. A disordered region spans residues 1493 to 1529; it reads GKERASEPEDVQEKQVPAQSTEKKYQSISRSSESTVA. Positions 1518-1529 are enriched in polar residues; the sequence is QSISRSSESTVA.

Belongs to the ABC transporter superfamily. ABCG family. PDR (TC 3.A.1.205) subfamily.

The protein localises to the cell membrane. It catalyses the reaction itraconazole(in) + ATP + H2O = itraconazole(out) + ADP + phosphate + H(+). It carries out the reaction voriconazole(in) + ATP + H2O = voriconazole(out) + ADP + phosphate + H(+). The enzyme catalyses fluconazole(in) + ATP + H2O = fluconazole(out) + ADP + phosphate + H(+). Pleiotropic ABC efflux transporter that confers resistance to structurally and functionally unrelated compounds including azoles such as fluconazole (FLC), itraconazole (ITC), posaconazole (POS), and voriconazole (VRC). This is ABC multidrug transporter AFR2 from Cryptococcus deuterogattii (strain R265) (Cryptococcus gattii VGII (strain R265)).